Here is a 306-residue protein sequence, read N- to C-terminus: Glutaminase (306 aa).

Residues S61, N111, E157, N164, Y188, Y240, and V258 each contribute to the substrate site.

The protein belongs to the glutaminase family. Homotetramer.

It catalyses the reaction L-glutamine + H2O = L-glutamate + NH4(+). In Pseudoalteromonas atlantica (strain T6c / ATCC BAA-1087), this protein is Glutaminase.